The following is a 420-amino-acid chain: Glucose-1-phosphate adenylyltransferase (420 aa).

Alpha-D-glucose 1-phosphate-binding positions include Tyr107, Gly173, 188-189 (EK), and Ser206.

It belongs to the bacterial/plant glucose-1-phosphate adenylyltransferase family. Homotetramer.

It carries out the reaction alpha-D-glucose 1-phosphate + ATP + H(+) = ADP-alpha-D-glucose + diphosphate. Its pathway is glycan biosynthesis; glycogen biosynthesis. Its function is as follows. Involved in the biosynthesis of ADP-glucose, a building block required for the elongation reactions to produce glycogen. Catalyzes the reaction between ATP and alpha-D-glucose 1-phosphate (G1P) to produce pyrophosphate and ADP-Glc. The chain is Glucose-1-phosphate adenylyltransferase from Shewanella baltica (strain OS155 / ATCC BAA-1091).